Reading from the N-terminus, the 96-residue chain is Small ribosomal subunit protein bS20 (96 aa).

It belongs to the bacterial ribosomal protein bS20 family.

In terms of biological role, binds directly to 16S ribosomal RNA. The polypeptide is Small ribosomal subunit protein bS20 (Anaplasma phagocytophilum (strain HZ)).